A 169-amino-acid polypeptide reads, in one-letter code: Peptide deformylase (169 aa).

Residues Cys-91 and His-133 each coordinate Fe cation. Glu-134 is an active-site residue. Residue His-137 participates in Fe cation binding.

The protein belongs to the polypeptide deformylase family. Requires Fe(2+) as cofactor.

It catalyses the reaction N-terminal N-formyl-L-methionyl-[peptide] + H2O = N-terminal L-methionyl-[peptide] + formate. Its function is as follows. Removes the formyl group from the N-terminal Met of newly synthesized proteins. Requires at least a dipeptide for an efficient rate of reaction. N-terminal L-methionine is a prerequisite for activity but the enzyme has broad specificity at other positions. In Klebsiella pneumoniae subsp. pneumoniae (strain ATCC 700721 / MGH 78578), this protein is Peptide deformylase.